Consider the following 388-residue polypeptide: Chorismate synthase (388 aa).

NADP(+) contacts are provided by R39 and R45. Residues R130–S132, N251–A252, G296, K311–T315, and R337 each bind FMN.

The protein belongs to the chorismate synthase family. In terms of assembly, homotetramer. Requires FMNH2 as cofactor.

It carries out the reaction 5-O-(1-carboxyvinyl)-3-phosphoshikimate = chorismate + phosphate. It functions in the pathway metabolic intermediate biosynthesis; chorismate biosynthesis; chorismate from D-erythrose 4-phosphate and phosphoenolpyruvate: step 7/7. In terms of biological role, catalyzes the anti-1,4-elimination of the C-3 phosphate and the C-6 proR hydrogen from 5-enolpyruvylshikimate-3-phosphate (EPSP) to yield chorismate, which is the branch point compound that serves as the starting substrate for the three terminal pathways of aromatic amino acid biosynthesis. This reaction introduces a second double bond into the aromatic ring system. The polypeptide is Chorismate synthase (Streptococcus mutans serotype c (strain ATCC 700610 / UA159)).